We begin with the raw amino-acid sequence, 225 residues long: Large ribosomal subunit protein eL15 (225 aa).

Residues 159-180 (RPFRGLTSAGKKMRGLRKSRGL) are disordered. The span at 169 to 180 (KKMRGLRKSRGL) shows a compositional bias: basic residues.

It belongs to the eukaryotic ribosomal protein eL15 family.

This is Large ribosomal subunit protein eL15 (rpl15e) from Aeropyrum pernix (strain ATCC 700893 / DSM 11879 / JCM 9820 / NBRC 100138 / K1).